The following is a 258-amino-acid chain: Malonyl-[acyl-carrier protein] O-methyltransferase (258 aa).

The protein belongs to the methyltransferase superfamily.

It catalyses the reaction malonyl-[ACP] + S-adenosyl-L-methionine = malonyl-[ACP] methyl ester + S-adenosyl-L-homocysteine. It functions in the pathway cofactor biosynthesis; biotin biosynthesis. Its function is as follows. Converts the free carboxyl group of a malonyl-thioester to its methyl ester by transfer of a methyl group from S-adenosyl-L-methionine (SAM). It allows to synthesize pimeloyl-ACP via the fatty acid synthetic pathway. This chain is Malonyl-[acyl-carrier protein] O-methyltransferase, found in Haemophilus ducreyi (strain 35000HP / ATCC 700724).